A 452-amino-acid chain; its full sequence is tRNA modification GTPase MnmE (452 aa).

(6S)-5-formyl-5,6,7,8-tetrahydrofolate-binding residues include arginine 21, glutamate 78, and lysine 118. The region spanning 214–375 is the TrmE-type G domain; that stretch reads GMKVVIAGRP…LRDHLKQAMG (162 aa). Asparagine 224 is a K(+) binding site. Residues 224–229, 243–249, and 268–271 contribute to the GTP site; these read NAGKSS, TDIAGTT, and DTAG. Serine 228 is a Mg(2+) binding site. The K(+) site is built by threonine 243, isoleucine 245, and threonine 248. Threonine 249 is a Mg(2+) binding site. A (6S)-5-formyl-5,6,7,8-tetrahydrofolate-binding site is contributed by lysine 452.

Belongs to the TRAFAC class TrmE-Era-EngA-EngB-Septin-like GTPase superfamily. TrmE GTPase family. As to quaternary structure, homodimer. Heterotetramer of two MnmE and two MnmG subunits. It depends on K(+) as a cofactor.

It is found in the cytoplasm. In terms of biological role, exhibits a very high intrinsic GTPase hydrolysis rate. Involved in the addition of a carboxymethylaminomethyl (cmnm) group at the wobble position (U34) of certain tRNAs, forming tRNA-cmnm(5)s(2)U34. The sequence is that of tRNA modification GTPase MnmE from Haemophilus influenzae (strain 86-028NP).